The following is a 364-amino-acid chain: DNA polymerase IV (364 aa).

A UmuC domain is found at 6 to 186; the sequence is IIHIDMDAFY…LPIESFWGVG (181 aa). Mg(2+)-binding residues include Asp-10 and Asp-104. The active site involves Glu-105.

The protein belongs to the DNA polymerase type-Y family. As to quaternary structure, monomer. It depends on Mg(2+) as a cofactor.

It localises to the cytoplasm. The enzyme catalyses DNA(n) + a 2'-deoxyribonucleoside 5'-triphosphate = DNA(n+1) + diphosphate. Its function is as follows. Poorly processive, error-prone DNA polymerase involved in untargeted mutagenesis. Copies undamaged DNA at stalled replication forks, which arise in vivo from mismatched or misaligned primer ends. These misaligned primers can be extended by PolIV. Exhibits no 3'-5' exonuclease (proofreading) activity. May be involved in translesional synthesis, in conjunction with the beta clamp from PolIII. The protein is DNA polymerase IV of Bacteroides fragilis (strain YCH46).